We begin with the raw amino-acid sequence, 257 residues long: Small ribosomal subunit protein uS2 (257 aa).

This sequence belongs to the universal ribosomal protein uS2 family.

This Ruegeria pomeroyi (strain ATCC 700808 / DSM 15171 / DSS-3) (Silicibacter pomeroyi) protein is Small ribosomal subunit protein uS2.